The chain runs to 350 residues: L-serine dehydratase (350 aa).

At Lys62 the chain carries N6-(pyridoxal phosphate)lysine.

The protein belongs to the serine/threonine dehydratase family. It depends on pyridoxal 5'-phosphate as a cofactor.

It localises to the cytoplasm. The catalysed reaction is L-serine = pyruvate + NH4(+). It functions in the pathway carbohydrate biosynthesis; gluconeogenesis. The sequence is that of L-serine dehydratase (sds) from Dictyostelium discoideum (Social amoeba).